Reading from the N-terminus, the 308-residue chain is Vacuolar lysine transporter YPQ1 (308 aa).

Residues 1–12 (MQLVPLELNRST) are Vacuolar-facing. An N-linked (GlcNAc...) asparagine glycan is attached at asparagine 9. Residues 10–76 (RSTLSGISGS…QHLLSTMIIL (67 aa)) form the PQ-loop 1 domain. A helical transmembrane segment spans residues 13 to 33 (LSGISGSISISCWIIVFVPQI). Topologically, residues 34–44 (YENFYRKSSDG) are cytoplasmic. A helical membrane pass occupies residues 45–65 (LSLLFVVLWLAGDVFNLMGAV). The Vacuolar segment spans residues 66–68 (MQH). Residues 69–89 (LLSTMIILAAYYTVADIILLG) form a helical membrane-spanning segment. Topologically, residues 90-167 (QCLWYDNEEK…EVNSRNLIKD (78 aa)) are cytoplasmic. A helical transmembrane segment spans residues 168–188 (IFIVSGVVFVGFISWYVTYCV). Asparagine 189 is a glycosylation site (N-linked (GlcNAc...) asparagine). At 189 to 205 (NYTQPPPVEDPSLPVPE) the chain is on the vacuolar side. Residues 206 to 226 (LQINWMAQIFGYLSALLYLGS) form a helical membrane-spanning segment. The PQ-loop 2 domain maps to 211 to 274 (MAQIFGYLSA…ISLDWKYLIM (64 aa)). At 227–244 (RIPQILLNFKRKSCEGIS) the chain is on the cytoplasmic side. Residues 245–265 (FLFFLFACLGNTTFIFSVIVI) form a helical membrane-spanning segment. Over 266–277 (SLDWKYLIMNAS) the chain is Vacuolar. Asparagine 275 is a glycosylation site (N-linked (GlcNAc...) asparagine). A helical membrane pass occupies residues 278-298 (WLVGSIGTLFMDFVIFSQFFI). Over 299-308 (YKRNKKFILN) the chain is Cytoplasmic.

It belongs to the laat-1 family.

Its subcellular location is the vacuole membrane. In terms of biological role, amino acid transporter that moves lysine into the vacuole. May also contribute to low affinity arginine import into the vacuole. Has also been suggested to mediate export of cationic amino acids from the vacuole. May function as an amino acid/proton antiporter. The polypeptide is Vacuolar lysine transporter YPQ1 (YPQ1) (Saccharomyces cerevisiae (strain ATCC 204508 / S288c) (Baker's yeast)).